Here is a 167-residue protein sequence, read N- to C-terminus: NADH-quinone oxidoreductase subunit B 2 (167 aa).

Residues cysteine 38, cysteine 39, cysteine 104, and cysteine 133 each coordinate [4Fe-4S] cluster.

The protein belongs to the complex I 20 kDa subunit family. In terms of assembly, NDH-1 is composed of 14 different subunits. Subunits NuoB, C, D, E, F, and G constitute the peripheral sector of the complex. [4Fe-4S] cluster serves as cofactor.

It is found in the cell membrane. The catalysed reaction is a quinone + NADH + 5 H(+)(in) = a quinol + NAD(+) + 4 H(+)(out). In terms of biological role, NDH-1 shuttles electrons from NADH, via FMN and iron-sulfur (Fe-S) centers, to quinones in the respiratory chain. The immediate electron acceptor for the enzyme in this species is believed to be ubiquinone. Couples the redox reaction to proton translocation (for every two electrons transferred, four hydrogen ions are translocated across the cytoplasmic membrane), and thus conserves the redox energy in a proton gradient. This is NADH-quinone oxidoreductase subunit B 2 from Roseiflexus sp. (strain RS-1).